The sequence spans 73 residues: Translation initiation factor IF-1 (73 aa).

The S1-like domain occupies 1–73 (MAKKEDTLVL…TKARVVYRHR (73 aa)).

The protein belongs to the IF-1 family. In terms of assembly, component of the 30S ribosomal translation pre-initiation complex which assembles on the 30S ribosome in the order IF-2 and IF-3, IF-1 and N-formylmethionyl-tRNA(fMet); mRNA recruitment can occur at any time during PIC assembly.

The protein resides in the cytoplasm. Its function is as follows. One of the essential components for the initiation of protein synthesis. Stabilizes the binding of IF-2 and IF-3 on the 30S subunit to which N-formylmethionyl-tRNA(fMet) subsequently binds. Helps modulate mRNA selection, yielding the 30S pre-initiation complex (PIC). Upon addition of the 50S ribosomal subunit IF-1, IF-2 and IF-3 are released leaving the mature 70S translation initiation complex. The chain is Translation initiation factor IF-1 from Chlamydia pneumoniae (Chlamydophila pneumoniae).